A 307-amino-acid chain; its full sequence is Putative S-adenosyl-L-methionine-dependent methyltransferase MMAR_4570 (307 aa).

S-adenosyl-L-methionine-binding positions include Asp-128 and 157 to 158; that span reads DL.

Belongs to the UPF0677 family.

Its function is as follows. Exhibits S-adenosyl-L-methionine-dependent methyltransferase activity. The sequence is that of Putative S-adenosyl-L-methionine-dependent methyltransferase MMAR_4570 from Mycobacterium marinum (strain ATCC BAA-535 / M).